Reading from the N-terminus, the 361-residue chain is MSFNTFGHMFRVTTFGESHGVAIGCVVDGCPPRIPLEPAEIQVDLDRRRPGQSRFTTQRQEPDQVKILSGVMPDPDTGAQVTTGTPIALLIENTDQRSKDYSEIKDKFRPGHADFTYEAKYGLRDYRGGGRSSARETATRVAAGAIARKILAGVKVRGALVQMGPHKIDRAKWDWDEIARNPFFCPDKDKAAFFEDYLDGIRKSGSSIGAVLEITAEGVPAGLGAPLYGKLDADLAAAMMSINAVKGVEIGAGFAAAELTGEENADEMRSANDGTRFLSNNAGGILGGIATGQPIVVRFAVKPTSSILTPRQTVDRAGHETEILTKGRHDPCVGIRAVPVGEAMMACVLADHLLRHRGQVG.

Arg-48 and Arg-54 together coordinate NADP(+). Residues 131 to 133 (RSS), 243 to 244 (NA), Gly-287, 302 to 306 (KPTSS), and Arg-328 contribute to the FMN site.

Belongs to the chorismate synthase family. In terms of assembly, homotetramer. The cofactor is FMNH2.

The enzyme catalyses 5-O-(1-carboxyvinyl)-3-phosphoshikimate = chorismate + phosphate. It functions in the pathway metabolic intermediate biosynthesis; chorismate biosynthesis; chorismate from D-erythrose 4-phosphate and phosphoenolpyruvate: step 7/7. Its function is as follows. Catalyzes the anti-1,4-elimination of the C-3 phosphate and the C-6 proR hydrogen from 5-enolpyruvylshikimate-3-phosphate (EPSP) to yield chorismate, which is the branch point compound that serves as the starting substrate for the three terminal pathways of aromatic amino acid biosynthesis. This reaction introduces a second double bond into the aromatic ring system. The chain is Chorismate synthase from Bradyrhizobium sp. (strain BTAi1 / ATCC BAA-1182).